A 400-amino-acid polypeptide reads, in one-letter code: uncharacterized protein (400 aa).

The signal sequence occupies residues 1–31; it reads MENPIKPVATRSIGIAVVLLVVGIVIGFAVG.

Belongs to the bacterial solute-binding protein 1 family. WtpA subfamily.

This is an uncharacterized protein from Thermoplasma acidophilum (strain ATCC 25905 / DSM 1728 / JCM 9062 / NBRC 15155 / AMRC-C165).